A 341-amino-acid polypeptide reads, in one-letter code: KH domain-containing RNA-binding protein QKI (341 aa).

The qua1 domain; involved in homodimerization stretch occupies residues 11 to 82; the sequence is PKPTPDYLMQ…PDAVGPIVQL (72 aa). Residues 87–153 enclose the KH domain; the sequence is YVPVKEYPDF…WEHLNEDLHV (67 aa). Residues 182-213 form a qua2 domain; involved in RNA binding region; that stretch reads AAEGEDSLKKMQLMELAILNGTYRDANIKSPA. The residue at position 188 (Ser188) is a Phosphoserine. Residue Arg227 is modified to Omega-N-methylarginine. Position 242 is an asymmetric dimethylarginine; by CARM1; alternate (Arg242). Residue Arg242 is modified to Omega-N-methylarginine; alternate. An Omega-N-methylarginine modification is found at Arg256. Residues 276 to 279 carry the SH3-binding motif; that stretch reads PPGP. The Nuclear localization signal motif lies at 324-330; sequence RVHPYQR.

This sequence belongs to the quaking family. Homodimer; does not require RNA to homodimerize. Able to heterodimerize with BICC1. Post-translationally, methylated by PRMT1. Tyrosine phosphorylated at its C-terminus, probably by FYN. Phosphorylation leads to decreased mRNA-binding affinity, affecting transport and/or stabilization of MBP mRNA. In terms of processing, ubiquitinated by RNF6 in macrophages, leading to its degradation.

It localises to the nucleus. The protein localises to the cytoplasm. Functionally, RNA reader protein, which recognizes and binds specific RNAs, thereby regulating RNA metabolic processes, such as pre-mRNA splicing, circular RNA (circRNA) formation, mRNA export, mRNA stability and/or translation. Involved in various cellular processes, such as mRNA storage into stress granules, apoptosis, lipid deposition, interferon response, glial cell fate and development. Binds to the 5'-NACUAAY-N(1,20)-UAAY-3' RNA core sequence. Acts as a mRNA modification reader that specifically recognizes and binds mRNA transcripts modified by internal N(7)-methylguanine (m7G). Promotes the formation of circular RNAs (circRNAs) during the epithelial to mesenchymal transition and in cardiomyocytes: acts by binding to sites flanking circRNA-forming exons. CircRNAs are produced by back-splicing circularization of pre-mRNAs. Plays a central role in myelinization via 3 distinct mechanisms. First, acts by protecting and promoting stability of target mRNAs such as MBP, SIRT2 and CDKN1B, which promotes oligodendrocyte differentiation. Second, participates in mRNA transport by regulating the nuclear export of MBP mRNA. Finally, indirectly regulates mRNA splicing of MAG pre-mRNA during oligodendrocyte differentiation by acting as a negative regulator of MAG exon 12 alternative splicing: acts by binding to HNRNPA1 mRNA splicing factor, preventing its translation. Involved in microglia differentiation and remyelination by regulating microexon alternative splicing of the Rho GTPase pathway. Involved in macrophage differentiation: promotes monocyte differentiation by regulating pre-mRNA splicing in naive peripheral blood monocytes. Acts as an important regulator of muscle development: required for the contractile function of cardiomyocytes by regulating alternative splicing of cardiomyocyte transcripts. Acts as a negative regulator of thermogenesis by decreasing stability, nuclear export and translation of mRNAs encoding PPARGC1A and UCP1. Also required for visceral endoderm function and blood vessel development. May also play a role in smooth muscle development. In addition to its RNA-binding activity, also acts as a nuclear transcription coactivator for SREBF2/SREBP2. This Bos taurus (Bovine) protein is KH domain-containing RNA-binding protein QKI.